A 109-amino-acid polypeptide reads, in one-letter code: Large ribosomal subunit protein P1C (109 aa).

The span at 68–83 (ASAPTAAGAGAAAPAE) shows a compositional bias: low complexity. The disordered stretch occupies residues 68 to 109 (ASAPTAAGAGAAAPAEAAEEEKKEEAKEEEESDEDMGFGLFD). Over residues 94-103 (KEEEESDEDM) the composition is skewed to acidic residues. Phosphoserine is present on Ser99.

It belongs to the eukaryotic ribosomal protein P1/P2 family. As to quaternary structure, component of the large ribosomal subunit (LSU). Mature yeast ribosomes consist of a small (40S) and a large (60S) subunit. The 40S small subunit contains 1 molecule of ribosomal RNA (18S rRNA) and at least 33 different proteins. The large 60S subunit contains 3 rRNA molecules (25S, 5.8S and 5S rRNA) and at least 46 different proteins. The acidic ribosomal P-proteins form the stalk structure of the 60S subunit. They are organized as a pentameric complex in which uL10/P0 interacts with 2 heterodimers of P1 and P2 proteins.

The protein resides in the cytoplasm. Its function is as follows. Component of the ribosome, a large ribonucleoprotein complex responsible for the synthesis of proteins in the cell. The small ribosomal subunit (SSU) binds messenger RNAs (mRNAs) and translates the encoded message by selecting cognate aminoacyl-transfer RNA (tRNA) molecules. The large subunit (LSU) contains the ribosomal catalytic site termed the peptidyl transferase center (PTC), which catalyzes the formation of peptide bonds, thereby polymerizing the amino acids delivered by tRNAs into a polypeptide chain. The nascent polypeptides leave the ribosome through a tunnel in the LSU and interact with protein factors that function in enzymatic processing, targeting, and the membrane insertion of nascent chains at the exit of the ribosomal tunnel. This Schizosaccharomyces pombe (strain 972 / ATCC 24843) (Fission yeast) protein is Large ribosomal subunit protein P1C (rpp103).